The sequence spans 542 residues: Homeobox and leucine zipper protein Homez (542 aa).

The segment at residues 55–114 (WTQAIQTSELDGNEHLLQAFSYFPYPSLADIALLCLRHGLQMEKVKTWFMAQRLRCGISW) is a DNA-binding region (homeobox 1). The tract at residues 165 to 193 (LSPLAPSEQPTHMKGLKVEPEEPSQVSQL) is disordered. Residues Lys181 and Lys201 each participate in a glycyl lysine isopeptide (Lys-Gly) (interchain with G-Cter in SUMO2) cross-link. Residues 250 to 307 (VHQPDKPASVSLLDNSCKEESEPSGIPPSSSTSSPSFQALANGTTATPKPLQPLGCIS) are disordered. Positions 272–285 (PSGIPPSSSTSSPS) are enriched in low complexity. Positions 286-296 (FQALANGTTAT) are enriched in polar residues. Ser345 carries the phosphoserine modification. 2 DNA-binding regions (homeobox) span residues 349–409 (QHQR…KHGQ) and 443–502 (TPPL…AEVV). Positions 352–357 (RKTKRK) match the Nuclear localization signal motif. Disordered stretches follow at residues 424 to 454 (FQDP…PPPD) and 501 to 542 (VVVC…IIWD). Position 443 is a phosphothreonine (Thr443). Residues 444–454 (PPLPAPPPPPD) show a composition bias toward pro residues. Positions 505–542 (LDEEDEEDEEDELPEDGEEEEEEEEDDDDGDDDVIIWD) are enriched in acidic residues.

In terms of assembly, homodimer or heterodimer (Potential). Interacts with HOXC8. As to expression, ubiquitous. Strongly expressed in testis.

The protein localises to the nucleus. Functionally, may function as a transcriptional regulator. The sequence is that of Homeobox and leucine zipper protein Homez (Homez) from Mus musculus (Mouse).